The primary structure comprises 558 residues: Dihydroxy-acid dehydratase (558 aa).

Asp78 serves as a coordination point for Mg(2+). A [2Fe-2S] cluster-binding site is contributed by Cys119. Mg(2+)-binding residues include Asp120 and Lys121. At Lys121 the chain carries N6-carboxylysine. Cys191 is a binding site for [2Fe-2S] cluster. Glu443 is a binding site for Mg(2+). The active-site Proton acceptor is the Ser469.

It belongs to the IlvD/Edd family. Homodimer. The cofactor is [2Fe-2S] cluster. Requires Mg(2+) as cofactor.

The enzyme catalyses (2R)-2,3-dihydroxy-3-methylbutanoate = 3-methyl-2-oxobutanoate + H2O. It catalyses the reaction (2R,3R)-2,3-dihydroxy-3-methylpentanoate = (S)-3-methyl-2-oxopentanoate + H2O. Its pathway is amino-acid biosynthesis; L-isoleucine biosynthesis; L-isoleucine from 2-oxobutanoate: step 3/4. The protein operates within amino-acid biosynthesis; L-valine biosynthesis; L-valine from pyruvate: step 3/4. In terms of biological role, functions in the biosynthesis of branched-chain amino acids. Catalyzes the dehydration of (2R,3R)-2,3-dihydroxy-3-methylpentanoate (2,3-dihydroxy-3-methylvalerate) into 2-oxo-3-methylpentanoate (2-oxo-3-methylvalerate) and of (2R)-2,3-dihydroxy-3-methylbutanoate (2,3-dihydroxyisovalerate) into 2-oxo-3-methylbutanoate (2-oxoisovalerate), the penultimate precursor to L-isoleucine and L-valine, respectively. The chain is Dihydroxy-acid dehydratase from Solidesulfovibrio magneticus (strain ATCC 700980 / DSM 13731 / RS-1) (Desulfovibrio magneticus).